Here is a 478-residue protein sequence, read N- to C-terminus: Bifunctional protein HldE (478 aa).

The tract at residues 1 to 318 (MKVTLPDFRQ…ENAIRGRADT (318 aa)) is ribokinase. 195-198 (NLSE) is a binding site for ATP. Asp-264 is an active-site residue. The tract at residues 344-478 (MTNGCFDILH…NMIKASTSQS (135 aa)) is cytidylyltransferase.

This sequence in the N-terminal section; belongs to the carbohydrate kinase PfkB family. It in the C-terminal section; belongs to the cytidylyltransferase family. Homodimer.

The enzyme catalyses D-glycero-beta-D-manno-heptose 7-phosphate + ATP = D-glycero-beta-D-manno-heptose 1,7-bisphosphate + ADP + H(+). It carries out the reaction D-glycero-beta-D-manno-heptose 1-phosphate + ATP + H(+) = ADP-D-glycero-beta-D-manno-heptose + diphosphate. Its pathway is nucleotide-sugar biosynthesis; ADP-L-glycero-beta-D-manno-heptose biosynthesis; ADP-L-glycero-beta-D-manno-heptose from D-glycero-beta-D-manno-heptose 7-phosphate: step 1/4. It functions in the pathway nucleotide-sugar biosynthesis; ADP-L-glycero-beta-D-manno-heptose biosynthesis; ADP-L-glycero-beta-D-manno-heptose from D-glycero-beta-D-manno-heptose 7-phosphate: step 3/4. In terms of biological role, catalyzes the phosphorylation of D-glycero-D-manno-heptose 7-phosphate at the C-1 position to selectively form D-glycero-beta-D-manno-heptose-1,7-bisphosphate. Functionally, catalyzes the ADP transfer from ATP to D-glycero-beta-D-manno-heptose 1-phosphate, yielding ADP-D-glycero-beta-D-manno-heptose. The protein is Bifunctional protein HldE of Pectobacterium atrosepticum (strain SCRI 1043 / ATCC BAA-672) (Erwinia carotovora subsp. atroseptica).